A 167-amino-acid polypeptide reads, in one-letter code: Protein-export protein SecB (167 aa).

This sequence belongs to the SecB family. As to quaternary structure, homotetramer, a dimer of dimers. One homotetramer interacts with 1 SecA dimer.

It is found in the cytoplasm. One of the proteins required for the normal export of preproteins out of the cell cytoplasm. It is a molecular chaperone that binds to a subset of precursor proteins, maintaining them in a translocation-competent state. It also specifically binds to its receptor SecA. This is Protein-export protein SecB from Wolbachia pipientis subsp. Culex pipiens (strain wPip).